The primary structure comprises 212 residues: Redox-sensing transcriptional repressor Rex (212 aa).

The H-T-H motif DNA-binding region spans 17–56 (LYARSLRYLLEEGIHSVSSQELGERINVTAAQIRKDLSYF). 91 to 96 (GIGLLG) provides a ligand contact to NAD(+).

It belongs to the transcriptional regulatory Rex family. In terms of assembly, homodimer.

Its subcellular location is the cytoplasm. Modulates transcription in response to changes in cellular NADH/NAD(+) redox state. The chain is Redox-sensing transcriptional repressor Rex from Chloroflexus aggregans (strain MD-66 / DSM 9485).